The following is a 498-amino-acid chain: Polyphosphate:AMP phosphotransferase (498 aa).

PPK2 stretches follow at residues 11–234 (IDDD…MQAA) and 269–491 (LSKE…LEKA).

The protein belongs to the polyphosphate kinase 2 (PPK2) family. Class II subfamily.

It catalyses the reaction [phosphate](n) + ADP = [phosphate](n+1) + AMP. Its function is as follows. Uses inorganic polyphosphate (polyP) as a donor to convert AMP to ADP. Can also convert GMP to GDP, with lower efficiency. In Pseudomonas syringae pv. tomato (strain ATCC BAA-871 / DC3000), this protein is Polyphosphate:AMP phosphotransferase.